The following is a 334-amino-acid chain: Ornithine carbamoyltransferase (334 aa).

Residues 57 to 60 (STRT), Gln-84, Arg-108, and 135 to 138 (HPTQ) each bind carbamoyl phosphate. Residues Asn-169, Asp-233, and 237-238 (SM) contribute to the L-ornithine site. Residues 275–276 (CL) and Arg-320 contribute to the carbamoyl phosphate site.

The protein belongs to the aspartate/ornithine carbamoyltransferase superfamily. OTCase family.

It is found in the cytoplasm. It catalyses the reaction carbamoyl phosphate + L-ornithine = L-citrulline + phosphate + H(+). It functions in the pathway amino-acid biosynthesis; L-arginine biosynthesis; L-arginine from L-ornithine and carbamoyl phosphate: step 1/3. Functionally, reversibly catalyzes the transfer of the carbamoyl group from carbamoyl phosphate (CP) to the N(epsilon) atom of ornithine (ORN) to produce L-citrulline. The polypeptide is Ornithine carbamoyltransferase (Aeromonas hydrophila subsp. hydrophila (strain ATCC 7966 / DSM 30187 / BCRC 13018 / CCUG 14551 / JCM 1027 / KCTC 2358 / NCIMB 9240 / NCTC 8049)).